We begin with the raw amino-acid sequence, 322 residues long: Cysteine protease yopT1 (322 aa).

Residues Cys-139, His-258, and Asp-274 contribute to the active site.

Belongs to the peptidase C58 family. Interacts with human ARHA.

The protein resides in the secreted. In terms of biological role, cysteine protease, which is translocated into infected cells and plays a central role in pathogenesis by cleaving the C-terminus end of the human small GTPase RhoA/ARHA, a regulator of cytoskeleton. Once cleaved, ARHA loses its lipid modification, and is released from the cell membrane, leading to the subsequent disruption of actin cytoskeleton of the host cell. This is Cysteine protease yopT1 (yopT1) from Yersinia enterocolitica.